Consider the following 327-residue polypeptide: Phosphate acyltransferase (327 aa).

This sequence belongs to the PlsX family. Homodimer. Probably interacts with PlsY.

The protein resides in the cytoplasm. The catalysed reaction is a fatty acyl-[ACP] + phosphate = an acyl phosphate + holo-[ACP]. The protein operates within lipid metabolism; phospholipid metabolism. Its function is as follows. Catalyzes the reversible formation of acyl-phosphate (acyl-PO(4)) from acyl-[acyl-carrier-protein] (acyl-ACP). This enzyme utilizes acyl-ACP as fatty acyl donor, but not acyl-CoA. The chain is Phosphate acyltransferase from Mycoplasma mobile (strain ATCC 43663 / 163K / NCTC 11711) (Mesomycoplasma mobile).